Reading from the N-terminus, the 406-residue chain is LIM/homeobox protein Lhx1 (406 aa).

LIM zinc-binding domains follow at residues 4–54 (CAGC…CKND) and 63–117 (CAGC…CKED). Residues 125-136 (AKENSLHSATTG) show a composition bias toward polar residues. 2 disordered regions span residues 125–187 (AKEN…RTTI) and 296–372 (FPQG…SAEV). Positions 137-148 (SDPSLSPDSQDP) are enriched in low complexity. The segment covering 151-167 (DDAKDSESANVSDKETG) has biased composition (basic and acidic residues). The homeobox DNA-binding region spans 180–239 (RRGPRTTIKAKQLETLKAAFAATPKPTRHIREQLAQETGLNMRVIQVWFQNRRSKERRMK).

The protein resides in the nucleus. Transcriptional factor that defines subclasses of motoneurons that segregate into columns in the spinal cord and select distinct axon pathways. Acts in conjunction with ISL-2. This chain is LIM/homeobox protein Lhx1 (LHX1), found in Gallus gallus (Chicken).